A 366-amino-acid chain; its full sequence is Probable trehalose-phosphate phosphatase 3 (366 aa).

The protein belongs to the trehalose phosphatase family. A divalent metal cation serves as cofactor.

The enzyme catalyses alpha,alpha-trehalose 6-phosphate + H2O = alpha,alpha-trehalose + phosphate. The protein operates within glycan biosynthesis; trehalose biosynthesis. Functionally, removes the phosphate from trehalose 6-phosphate to produce free trehalose. Trehalose accumulation in plant may improve abiotic stress tolerance. The protein is Probable trehalose-phosphate phosphatase 3 (TPP3) of Oryza sativa subsp. japonica (Rice).